The sequence spans 934 residues: Replication factor C subunit 1 (934 aa).

Positions 1-190 (MSNSDIRSFF…RSSKSKGLPR (190 aa)) are disordered. A Phosphoserine modification is found at serine 27. The span at 29-39 (KPKRSLKKKRI) shows a compositional bias: basic residues. Polar residues predominate over residues 89-104 (GVSTTPDEYFEQQSTR). Basic and acidic residues predominate over residues 118–128 (TTSKDVVHPVK). Residues 165–186 (TSKSKSHTTTATTHTSRSSKSK) show a composition bias toward low complexity. The 91-residue stretch at 236-326 (GNSDCLSGIS…PASGGTGAAA (91 aa)) folds into the BRCT domain. ATP is bound by residues threonine 362, cysteine 374, 416–423 (GPPGIGKT), and asparagine 519. The span at 876–895 (AEDEMLEEASDSEAANEEDI) shows a compositional bias: acidic residues. Positions 876-934 (AEDEMLEEASDSEAANEEDIDLSKDKFISVPKKPKKRTKAKAEASSSSSTSRRSRKKTA) are disordered.

This sequence belongs to the activator 1 large subunit family. In terms of assembly, heteropentamer of subunits rfc1, rfc2, rfc3, rfc4 and rfc5 that forms a complex (RFC) with PCNA in the presence of ATP. Interacts with cdc24.

The protein localises to the nucleus. Its subcellular location is the nucleolus. The elongation of primed DNA templates by DNA polymerase delta and epsilon requires the action of the accessory proteins PCNA and activator 1. Subunit 1 is essential for cell cycle progression. It may associate with components of the DNA replication machinery and serve to enhance the efficiency of DNA replication. This Schizosaccharomyces pombe (strain 972 / ATCC 24843) (Fission yeast) protein is Replication factor C subunit 1 (rfc1).